The primary structure comprises 637 residues: Epithelial sodium channel subunit alpha (637 aa).

The disordered stretch occupies residues 1–34 (MGTASRGGSVKAEKMPEGEKTRQCKQETEQQQKE). Residues 1-76 (MGTASRGGSV…VCSKKNKMKT (76 aa)) are Cytoplasmic-facing. Basic and acidic residues predominate over residues 11–34 (KAEKMPEGEKTRQCKQETEQQQKE). Residues 77-97 (AFWSVLFILTFGLMYWQFGIL) form a helical membrane-spanning segment. Topologically, residues 98–548 (YREYFSYPVN…NQWSLWFGSS (451 aa)) are extracellular. 10 disulfide bridges follow: C125-C292, C217-C224, C269-C276, C380-C465, C402-C442, C402-C461, C406-C457, C415-C442, C415-C465, and C417-C431. A helical membrane pass occupies residues 549–569 (VLSVMELAELILDFTVITFIL). Over 570 to 637 (AFRWFRSKQW…PSKDGETGLE (68 aa)) the chain is Cytoplasmic.

The protein belongs to the amiloride-sensitive sodium channel (TC 1.A.6) family. SCNN1A subfamily. Heterotrimer; containing an alpha/SCNN1A, a beta/SCNN1B and a gamma/SCNN1G subunit. In terms of tissue distribution, the long isoform has been found in cochlea, colon, and cartilage. The short isoform is only found in cochlea.

The protein localises to the apical cell membrane. Its subcellular location is the cell projection. It is found in the cilium. The protein resides in the cytoplasmic granule. It localises to the cytoplasm. The protein localises to the cytoplasmic vesicle. Its subcellular location is the secretory vesicle. It is found in the acrosome. The protein resides in the flagellum. The catalysed reaction is Na(+)(in) = Na(+)(out). With respect to regulation, originally identified and characterized by its inhibition by the diuretic drug amiloride. Functionally, this is one of the three pore-forming subunits of the heterotrimeric epithelial sodium channel (ENaC), a critical regulator of sodium balance and fluid homeostasis. ENaC operates in epithelial tissues, where it mediates the electrodiffusion of sodium ions from extracellular fluid through the apical membrane of cells, with water following osmotically. The polypeptide is Epithelial sodium channel subunit alpha (Gallus gallus (Chicken)).